The following is a 426-amino-acid chain: Adenylosuccinate synthetase (426 aa).

GTP-binding positions include 12-18 (GDEGKGK) and 40-42 (GHT). The active-site Proton acceptor is the aspartate 13. The Mg(2+) site is built by aspartate 13 and glycine 40. IMP-binding positions include 13-16 (DEGK), 38-41 (NAGH), threonine 131, arginine 145, glutamine 226, threonine 241, and arginine 305. The active-site Proton donor is histidine 41. Substrate is bound at residue 301–307 (ATTGRKR). Residues arginine 307, 333 to 335 (KLD), and 415 to 417 (SVG) contribute to the GTP site.

The protein belongs to the adenylosuccinate synthetase family. As to quaternary structure, homodimer. It depends on Mg(2+) as a cofactor.

Its subcellular location is the cytoplasm. The enzyme catalyses IMP + L-aspartate + GTP = N(6)-(1,2-dicarboxyethyl)-AMP + GDP + phosphate + 2 H(+). It functions in the pathway purine metabolism; AMP biosynthesis via de novo pathway; AMP from IMP: step 1/2. Functionally, plays an important role in the de novo pathway of purine nucleotide biosynthesis. Catalyzes the first committed step in the biosynthesis of AMP from IMP. The sequence is that of Adenylosuccinate synthetase from Nitratidesulfovibrio vulgaris (strain DP4) (Desulfovibrio vulgaris).